Reading from the N-terminus, the 293-residue chain is Meteorin (293 aa).

Residues 1–23 form the signal peptide; sequence MGFPAAALLCALCCGLLAPAARA. 5 cysteine pairs are disulfide-bonded: C30–C51, C82–C118, C171–C242, C174–C266, and C184–C288.

This sequence belongs to the meteorin family. As to quaternary structure, monomer.

Its subcellular location is the secreted. Involved in both glial cell differentiation and axonal network formation during neurogenesis. Promotes astrocyte differentiation and transforms cerebellar astrocytes into radial glia. Also induces axonal extension in small and intermediate neurons of sensory ganglia by activating nearby satellite glia. This chain is Meteorin (METRN), found in Homo sapiens (Human).